A 103-amino-acid polypeptide reads, in one-letter code: Small ubiquitin-related modifier 3 (103 aa).

Glycyl lysine isopeptide (Lys-Gly) (interchain with G-Cter in SUMO2) cross-links involve residues Lys5 and Lys7. Lys11 is covalently cross-linked (Glycyl lysine isopeptide (Lys-Gly) (interchain with G-Cter in SUMO); alternate). Residue Lys11 forms a Glycyl lysine isopeptide (Lys-Gly) (interchain with G-Cter in SUMO2); alternate linkage. Residues 15 to 92 (DHINLKVAGQ…IDVFQQQTGG (78 aa)) enclose the Ubiquitin-like domain. A Glycyl lysine isopeptide (Gly-Lys) (interchain with K-? in acceptor proteins) cross-link involves residue Gly92. A propeptide spanning residues 93-103 (VPESSLAGHSF) is cleaved from the precursor.

Belongs to the ubiquitin family. SUMO subfamily. Covalently attached to a number of proteins. Interacts with BMAL1. Interacts with USP25 (via ts SIM domain); the interaction sumoylates USP25 and inhibits its ubiquitin hydrolyzing activity. Interacts with SAE2 and UBE2I. Post-translationally, polymeric chains can be formed through Lys-11 cross-linking. In terms of processing, cleavage of precursor form by SENP1, SENP2 or SENP5 is necessary for function. In terms of tissue distribution, expressed predominantly in liver.

It is found in the cytoplasm. The protein resides in the nucleus. The protein localises to the PML body. Functionally, ubiquitin-like protein which can be covalently attached to target lysines either as a monomer or as a lysine-linked polymer. Does not seem to be involved in protein degradation and may function as an antagonist of ubiquitin in the degradation process. Plays a role in a number of cellular processes such as nuclear transport, DNA replication and repair, mitosis and signal transduction. Covalent attachment to its substrates requires prior activation by the E1 complex SAE1-SAE2 and linkage to the E2 enzyme UBE2I, and can be promoted by an E3 ligase such as PIAS1-4, RANBP2 or CBX4. Plays a role in the regulation of sumoylation status of SETX. In Homo sapiens (Human), this protein is Small ubiquitin-related modifier 3.